An 834-amino-acid polypeptide reads, in one-letter code: Periplasmic nitrate reductase (834 aa).

Residues 1 to 32 constitute a signal peptide (tat-type signal); the sequence is MTDMKIDRRQMLKLEAAAIAAAAAGMPSTSLA. Positions 44–100 constitute a 4Fe-4S Mo/W bis-MGD-type domain; the sequence is LKWDKAACRFCGTGCSVMVATKDNRVVATHGDIKAEVNRGLNCVKGYFLSKIMYGHD. 4 residues coordinate [4Fe-4S] cluster: Cys51, Cys54, Cys58, and Cys86. Mo-bis(molybdopterin guanine dinucleotide) is bound by residues Lys88, Gln155, Asn180, Cys184, 217–224, 248–252, 267–269, Met378, Gln382, Asn488, 514–515, Lys537, Asp564, and 724–733; these read WGSNMAEM, STFEH, QTD, SD, and TGRVVEHWHS. Trp800 serves as a coordination point for substrate. Mo-bis(molybdopterin guanine dinucleotide)-binding residues include Asn808 and Lys825.

This sequence belongs to the prokaryotic molybdopterin-containing oxidoreductase family. NasA/NapA/NarB subfamily. Component of the periplasmic nitrate reductase NapAB complex composed of NapA and NapB. [4Fe-4S] cluster is required as a cofactor. Mo-bis(molybdopterin guanine dinucleotide) serves as cofactor. Predicted to be exported by the Tat system. The position of the signal peptide cleavage has not been experimentally proven.

The protein resides in the periplasm. The enzyme catalyses 2 Fe(II)-[cytochrome] + nitrate + 2 H(+) = 2 Fe(III)-[cytochrome] + nitrite + H2O. Functionally, catalytic subunit of the periplasmic nitrate reductase complex NapAB. Receives electrons from NapB and catalyzes the reduction of nitrate to nitrite. This Bradyrhizobium sp. (strain BTAi1 / ATCC BAA-1182) protein is Periplasmic nitrate reductase.